A 298-amino-acid polypeptide reads, in one-letter code: Fe(II)/2-oxoglutarate-dependent dioxygenase nvfF (298 aa).

3 residues coordinate Fe cation: His137, Asp139, and His212.

Belongs to the PhyH family. In terms of assembly, homodimer. It depends on Fe cation as a cofactor.

It catalyses the reaction fumigatonoid C + 2-oxoglutarate + O2 = novofumigatonin + succinate + CO2 + H2O. It participates in secondary metabolite biosynthesis; terpenoid biosynthesis. In terms of biological role, fe(II)/2-oxoglutarate-dependent dioxygenase; part of the gene cluster that mediates the biosynthesis of novofumigatonin, a heavily oxygenated meroterpenoid containing a unique orthoester moiety. The first step of the pathway is the synthesis of 3,5-dimethylorsellinic acid (DMOA) by the polyketide synthase nvfA via condensation of one acetyl-CoA starter unit with 3 malonyl-CoA units and 2 methylations. DMOA is then converted to farnesyl-DMOA by the farnesyltransferase nvfB. Epoxydation by FAD-dependent monooxygenase nvfK, followed by a protonation-initiated cyclization catalyzed by the terpene cyclase nvfL leads to the production of asnavolin H. The short chain dehydrogenase nvfC then as a 3-OH dehydrogenase of asnovolin H to yield chemesin D. There are two branches to synthesize asnovolin A from chemesin D. In one branch, chemesin D undergoes Baeyer-Villiger oxidation by nvfH, methylation by nvfJ, and enoyl reduction by the nvfM D enoylreductase that reduces the double bond between C-5'and C-6', to form respectively asnovolin I, asnovolin K, and asnovolin A. In the other branch, the methylation precedes the Baeyer-Villiger oxidation and the enoyl reduction to yield asnovolin A via the asnovolin J intermediate. Asnovolin A is further converted to fumigatonoid A by the Fe(II)/2-oxoglutarate-dependent dioxygenase nvfI that catalyzes an endoperoxidation reaction. The alpha/beta hydrolase nvfD then acts as an epimerase that converts fumigatonoid A to its C-5' epimer, which then undergoes spontaneous or nvfD-catalyzed lactonization. The following step utilizes the ketoreductase nvfG to produce fumigatonoid B. The dioxygenase nvfE further converts fumigatonoid B into fumigatonoid C. Finally the Fe(II)/2-oxoglutarate-dependent dioxygenase nvfF catalyzes two rounds of oxidation to transform fumigatonoid C into the end product, novofumigatonin A. This is Fe(II)/2-oxoglutarate-dependent dioxygenase nvfF from Aspergillus novofumigatus (strain IBT 16806).